The sequence spans 405 residues: Corticosteroid-binding globulin (405 aa).

An N-terminal signal peptide occupies residues 1-22 (MPLLLYTCLLWLPTSGLWTVQA). N-linked (GlcNAc...) asparagine glycans are attached at residues Asn-31, Asn-96, and Asn-176. Gln-254 contributes to the cortisol binding site. N-linked (GlcNAc...) asparagine glycosylation occurs at Asn-260. Asn-286 provides a ligand contact to cortisol. 2 N-linked (GlcNAc...) asparagine glycosylation sites follow: Asn-330 and Asn-369. Cortisol is bound by residues His-390 and Trp-393.

It belongs to the serpin family. In terms of processing, N-glycosylated; binds 5 oligosaccharide chains. Glycosylation in position Asn-260 is needed for steroid binding. In terms of tissue distribution, plasma; synthesized in liver. Has also been identified in a number of glycocorticoid responsive cells.

It is found in the secreted. Functionally, major transport protein for glucocorticoids and progestins in the blood of almost all vertebrate species. This chain is Corticosteroid-binding globulin (SERPINA6), found in Homo sapiens (Human).